A 596-amino-acid polypeptide reads, in one-letter code: Elongation factor 4 (596 aa).

One can recognise a tr-type G domain in the interval 2–183; sequence NNIRNFSIIA…TIIRKIPPPK (182 aa). GTP-binding positions include 14–19 and 130–133; these read DHGKST and NKID.

It belongs to the TRAFAC class translation factor GTPase superfamily. Classic translation factor GTPase family. LepA subfamily.

The protein localises to the cell inner membrane. The enzyme catalyses GTP + H2O = GDP + phosphate + H(+). Functionally, required for accurate and efficient protein synthesis under certain stress conditions. May act as a fidelity factor of the translation reaction, by catalyzing a one-codon backward translocation of tRNAs on improperly translocated ribosomes. Back-translocation proceeds from a post-translocation (POST) complex to a pre-translocation (PRE) complex, thus giving elongation factor G a second chance to translocate the tRNAs correctly. Binds to ribosomes in a GTP-dependent manner. The sequence is that of Elongation factor 4 from Campylobacter fetus subsp. fetus (strain 82-40).